Here is a 173-residue protein sequence, read N- to C-terminus: MTIIVGIDPGSRVTGYGIIRQQGRHLTYLGSGCIRTVVDDMPTRLKLIYAGVSEIITQFRPDCMAIEQVFMAKNPDSALKLGQARGVAIVAGVNQDLPVFEYAARLVKQTVVGTGAADKKQVQHMVRSLLKLSASPQADAADALAIAITHCHFNQSLLRTSAAKVNPLAGRLR.

Residues Asp8, Glu67, and Asp139 contribute to the active site. Mg(2+) contacts are provided by Asp8, Glu67, and Asp139.

This sequence belongs to the RuvC family. Homodimer which binds Holliday junction (HJ) DNA. The HJ becomes 2-fold symmetrical on binding to RuvC with unstacked arms; it has a different conformation from HJ DNA in complex with RuvA. In the full resolvosome a probable DNA-RuvA(4)-RuvB(12)-RuvC(2) complex forms which resolves the HJ. Mg(2+) serves as cofactor.

It is found in the cytoplasm. The catalysed reaction is Endonucleolytic cleavage at a junction such as a reciprocal single-stranded crossover between two homologous DNA duplexes (Holliday junction).. Functionally, the RuvA-RuvB-RuvC complex processes Holliday junction (HJ) DNA during genetic recombination and DNA repair. Endonuclease that resolves HJ intermediates. Cleaves cruciform DNA by making single-stranded nicks across the HJ at symmetrical positions within the homologous arms, yielding a 5'-phosphate and a 3'-hydroxyl group; requires a central core of homology in the junction. The consensus cleavage sequence is 5'-(A/T)TT(C/G)-3'. Cleavage occurs on the 3'-side of the TT dinucleotide at the point of strand exchange. HJ branch migration catalyzed by RuvA-RuvB allows RuvC to scan DNA until it finds its consensus sequence, where it cleaves and resolves the cruciform DNA. This is Crossover junction endodeoxyribonuclease RuvC from Pectobacterium carotovorum subsp. carotovorum (strain PC1).